Reading from the N-terminus, the 346-residue chain is GTPase Obg (346 aa).

The Obg domain occupies 1 to 159; that stretch reads MRFVDRCRLK…RELRLELKVL (159 aa). Positions 122–147 are disordered; the sequence is KGGRGNLHFKSPHDRAPRRAEPGEPG. Residues 132–147 are compositionally biased toward basic and acidic residues; that stretch reads SPHDRAPRRAEPGEPG. In terms of domain architecture, OBG-type G spans 160-336; sequence ADVGLLGFPN…LVRELAALAR (177 aa). GTP contacts are provided by residues 166–173, 191–195, 218–221, 288–291, and 317–319; these read GFPNAGKS, FTTLT, DIPG, TKAD, and SAA. S173 and T193 together coordinate Mg(2+).

This sequence belongs to the TRAFAC class OBG-HflX-like GTPase superfamily. OBG GTPase family. As to quaternary structure, monomer. It depends on Mg(2+) as a cofactor.

Its subcellular location is the cytoplasm. In terms of biological role, an essential GTPase which binds GTP, GDP and possibly (p)ppGpp with moderate affinity, with high nucleotide exchange rates and a fairly low GTP hydrolysis rate. Plays a role in control of the cell cycle, stress response, ribosome biogenesis and in those bacteria that undergo differentiation, in morphogenesis control. The protein is GTPase Obg of Sorangium cellulosum (strain So ce56) (Polyangium cellulosum (strain So ce56)).